The following is a 207-amino-acid chain: GTP cyclohydrolase 1 (207 aa).

Residues Cys94, His97, and Cys167 each contribute to the Zn(2+) site.

This sequence belongs to the GTP cyclohydrolase I family. In terms of assembly, toroid-shaped homodecamer, composed of two pentamers of five dimers.

It carries out the reaction GTP + H2O = 7,8-dihydroneopterin 3'-triphosphate + formate + H(+). It functions in the pathway cofactor biosynthesis; 7,8-dihydroneopterin triphosphate biosynthesis; 7,8-dihydroneopterin triphosphate from GTP: step 1/1. The sequence is that of GTP cyclohydrolase 1 from Thermobifida fusca (strain YX).